A 450-amino-acid chain; its full sequence is 3-phosphoshikimate 1-carboxyvinyltransferase (450 aa).

The tract at residues 1 to 25 (MSAHGDPKPMTARKGGALTGTAEVP) is disordered. Positions 28, 29, and 33 each coordinate 3-phosphoshikimate. Lys28 is a binding site for phosphoenolpyruvate. 2 residues coordinate phosphoenolpyruvate: Gly101 and Arg129. The 3-phosphoshikimate site is built by Ser174, Gln176, Asp327, and Lys354. Gln176 provides a ligand contact to phosphoenolpyruvate. Asp327 serves as the catalytic Proton acceptor. Arg358 and Arg403 together coordinate phosphoenolpyruvate.

This sequence belongs to the EPSP synthase family. In terms of assembly, monomer.

The protein localises to the cytoplasm. It carries out the reaction 3-phosphoshikimate + phosphoenolpyruvate = 5-O-(1-carboxyvinyl)-3-phosphoshikimate + phosphate. Its pathway is metabolic intermediate biosynthesis; chorismate biosynthesis; chorismate from D-erythrose 4-phosphate and phosphoenolpyruvate: step 6/7. Functionally, catalyzes the transfer of the enolpyruvyl moiety of phosphoenolpyruvate (PEP) to the 5-hydroxyl of shikimate-3-phosphate (S3P) to produce enolpyruvyl shikimate-3-phosphate and inorganic phosphate. The chain is 3-phosphoshikimate 1-carboxyvinyltransferase from Jannaschia sp. (strain CCS1).